The following is a 1308-amino-acid chain: Limbin (1308 aa).

Positions 1-26 are cleaved as a signal peptide; it reads MDPSGSRGRPTWVLAGGLLAVALALG. Residues 27-300 are Extracellular-facing; sequence GRGCLGASSR…VLPHHGLHAA (274 aa). The disordered stretch occupies residues 36-76; it reads RPRWRPLGAQPPRDPQVAPRSGPGLRIPPGRSGAGPESSTQ. N-linked (GlcNAc...) asparagine glycosylation is present at Asn220. Residues 301 to 321 form a helical membrane-spanning segment; the sequence is GFFIAFLLSLVLTWAALFLMV. At 322–1308 the chain is on the cytoplasmic side; that stretch reads RYQCLKGNML…KKAMRALGMD (987 aa). Coiled-coil stretches lie at residues 455 to 578, 636 to 800, and 1001 to 1113; these read TAEC…ELMD, DQME…DRDQ, and ASEM…EADT. Residues 784-801 are compositionally biased toward basic and acidic residues; the sequence is MAARAEQLEGEERDRDQE. Residues 784–816 are disordered; that stretch reads MAARAEQLEGEERDRDQEGVQSVRQRLKDDAPE.

In terms of assembly, component of the EvC complex composed of EFCAB7, IQCE, EVC2 and EVC; built from two subcomplexes, EVC2:EVC and EFCAB7:IQCE. Interacts with EVC. Interacts (via N-terminal end) with EFCAB7. Interacts (via N-terminal end) with IQCE. In terms of tissue distribution, found in the heart, placenta, lung, liver, skeletal muscle, kidney and pancreas.

Its subcellular location is the cell membrane. The protein resides in the cytoplasm. The protein localises to the cytoskeleton. It is found in the cilium basal body. It localises to the cell projection. Its subcellular location is the cilium. The protein resides in the cilium membrane. The protein localises to the nucleus. Functionally, component of the EvC complex that positively regulates ciliary Hedgehog (Hh) signaling. Plays a critical role in bone formation and skeletal development. May be involved in early embryonic morphogenesis. In Homo sapiens (Human), this protein is Limbin (EVC2).